The sequence spans 433 residues: Histidine--tRNA ligase (433 aa).

It belongs to the class-II aminoacyl-tRNA synthetase family. As to quaternary structure, homodimer.

The protein resides in the cytoplasm. The catalysed reaction is tRNA(His) + L-histidine + ATP = L-histidyl-tRNA(His) + AMP + diphosphate + H(+). The polypeptide is Histidine--tRNA ligase (Pseudothermotoga lettingae (strain ATCC BAA-301 / DSM 14385 / NBRC 107922 / TMO) (Thermotoga lettingae)).